The primary structure comprises 415 residues: Serine hydroxymethyltransferase (415 aa).

Residues Leu117 and 121 to 123 contribute to the (6S)-5,6,7,8-tetrahydrofolate site; that span reads GHL. The residue at position 226 (Lys226) is an N6-(pyridoxal phosphate)lysine.

It belongs to the SHMT family. As to quaternary structure, homodimer. The cofactor is pyridoxal 5'-phosphate.

Its subcellular location is the cytoplasm. It catalyses the reaction (6R)-5,10-methylene-5,6,7,8-tetrahydrofolate + glycine + H2O = (6S)-5,6,7,8-tetrahydrofolate + L-serine. Its pathway is one-carbon metabolism; tetrahydrofolate interconversion. It participates in amino-acid biosynthesis; glycine biosynthesis; glycine from L-serine: step 1/1. Its function is as follows. Catalyzes the reversible interconversion of serine and glycine with tetrahydrofolate (THF) serving as the one-carbon carrier. This reaction serves as the major source of one-carbon groups required for the biosynthesis of purines, thymidylate, methionine, and other important biomolecules. Also exhibits THF-independent aldolase activity toward beta-hydroxyamino acids, producing glycine and aldehydes, via a retro-aldol mechanism. The polypeptide is Serine hydroxymethyltransferase (Dehalococcoides mccartyi (strain ATCC BAA-2100 / JCM 16839 / KCTC 5957 / BAV1)).